The sequence spans 362 residues: Serine/threonine-protein kinase SBK2 (362 aa).

A compositionally biased stretch (basic and acidic residues) spans 1–11; the sequence is MPGKQSEDRPM. Residues 1–20 are disordered; that stretch reads MPGKQSEDRPMEVAAVEDGG. The Protein kinase domain maps to 62–330; sequence YEEVRPLGQG…IKSYLGQPWK (269 aa). ATP is bound by residues 68 to 76 and lysine 91; that span reads LGQGRFGRV. Residue aspartate 183 is the Proton acceptor of the active site. Residues 317–362 form a disordered region; that stretch reads PVSSIKSYLGQPWKQREEGAEELTKELREDGSRGGQEAAKGEQPAC. Residues 330–348 show a composition bias toward basic and acidic residues; sequence KQREEGAEELTKELREDGS.

It belongs to the protein kinase superfamily. Ser/Thr protein kinase family. STKL subfamily.

It catalyses the reaction L-seryl-[protein] + ATP = O-phospho-L-seryl-[protein] + ADP + H(+). It carries out the reaction L-threonyl-[protein] + ATP = O-phospho-L-threonyl-[protein] + ADP + H(+). In Rattus norvegicus (Rat), this protein is Serine/threonine-protein kinase SBK2 (Sbk2).